The following is a 775-amino-acid chain: Chitin synthase 6 (775 aa).

The next 6 helical transmembrane spans lie at 19 to 39 (VLLM…YCLV), 54 to 74 (CIIV…IMVV), 94 to 114 (LQWF…LFCI), 441 to 461 (FMQN…LAIM), 470 to 490 (LPVG…LYFG), and 498 to 518 (IWLY…YMVY). The segment covering 532 to 541 (RADAAAADSH) has biased composition (low complexity). 2 disordered regions span residues 532–603 (RADA…DGKF) and 702–775 (PSAF…KTSR). Positions 542–556 (TTAREAAEQAEKQGD) are enriched in basic and acidic residues. The span at 577–586 (NRESTTTSEL) shows a compositional bias: polar residues. Residues 702 to 713 (PSAFPHAHSASA) are compositionally biased toward low complexity. The N-linked (GlcNAc...) asparagine glycan is linked to asparagine 724. A compositionally biased stretch (basic and acidic residues) spans 732–741 (RSEDIQRFSE). The span at 754-763 (SRNVGNSSFA) shows a compositional bias: polar residues. An N-linked (GlcNAc...) asparagine glycan is attached at asparagine 759. A compositionally biased stretch (basic residues) spans 766–775 (MAKRTPKTSR).

Belongs to the chitin synthase family. Class VII subfamily.

The protein resides in the cell membrane. It catalyses the reaction [(1-&gt;4)-N-acetyl-beta-D-glucosaminyl](n) + UDP-N-acetyl-alpha-D-glucosamine = [(1-&gt;4)-N-acetyl-beta-D-glucosaminyl](n+1) + UDP + H(+). Functionally, polymerizes chitin, a structural polymer of the cell wall and septum, by transferring the sugar moiety of UDP-GlcNAc to the non-reducing end of the growing chitin polymer. Shows additive effects in septum formation with CHS1, CHS2, CHS3A, CHS4, CHS5 and CHS7. Involved in virulence and mediates mycotoxin deoxinivalenol (DON) biosynthesis via the regulation of the expression of TRI4, TRI5 and TRI6. The chain is Chitin synthase 6 from Gibberella zeae (strain ATCC MYA-4620 / CBS 123657 / FGSC 9075 / NRRL 31084 / PH-1) (Wheat head blight fungus).